The following is a 517-amino-acid chain: Crotonobetaine/carnitine--CoA ligase (517 aa).

Belongs to the ATP-dependent AMP-binding enzyme family.

It carries out the reaction 4-(trimethylamino)butanoate + ATP + CoA = 4-(trimethylamino)butanoyl-CoA + AMP + diphosphate. The enzyme catalyses crotonobetaine + ATP + CoA = crotonobetainyl-CoA + AMP + diphosphate. The catalysed reaction is (R)-carnitine + ATP + CoA = (R)-carnitinyl-CoA + AMP + diphosphate. Its pathway is amine and polyamine metabolism; carnitine metabolism. In terms of biological role, catalyzes the transfer of CoA to carnitine, generating the initial carnitinyl-CoA needed for the CaiB reaction cycle. Also has activity toward crotonobetaine and gamma-butyrobetaine. The sequence is that of Crotonobetaine/carnitine--CoA ligase from Shigella flexneri.